We begin with the raw amino-acid sequence, 153 residues long: MFKPHVTVACVVHAEGKFLVVEETINGKALWNQPAGHLEADETLVEAAARELWEETGISAQPQHFIRMHQWIAPDKTPFLRFLFAIELEQICPTQPHDSDIDCCRWVSAEEILKASNLRSPLVAESIRCYQSGQRYPLEMIGDFNWPFTKGVI.

The Nudix hydrolase domain maps to 3–131 (KPHVTVACVV…LVAESIRCYQ (129 aa)). The Nudix box signature appears at 36 to 57 (GHLEADETLVEAAARELWEETG).

This sequence belongs to the Nudix hydrolase family. NudJ subfamily. In terms of assembly, monomer. Mg(2+) is required as a cofactor.

In Shigella boydii serotype 4 (strain Sb227), this protein is Phosphatase NudJ (nudJ).